Reading from the N-terminus, the 387-residue chain is Acetylserotonin O-methyltransferase (387 aa).

Residues Tyr-153, Trp-170, Glu-216, 246-248 (GDF), and Arg-263 contribute to the S-adenosyl-L-methionine site. His-266 (proton donor/acceptor) is an active-site residue. Substrate-binding residues include Asp-267 and Gln-317. Residues 354–387 (AARGGGAGARSDGGGGDATSQTGSGTGSEVGAQD) form a disordered region. A compositionally biased stretch (gly residues) spans 356 to 370 (RGGGAGARSDGGGGD).

This sequence belongs to the class I-like SAM-binding methyltransferase superfamily. Cation-independent O-methyltransferase family. Homodimer. As to expression, expressed predominantly in the pineal gland (at protein level). Very low expression, if any, in the retina.

It carries out the reaction N-acetylserotonin + S-adenosyl-L-methionine = melatonin + S-adenosyl-L-homocysteine + H(+). It functions in the pathway aromatic compound metabolism; melatonin biosynthesis; melatonin from serotonin: step 1/2. Its function is as follows. Catalyzes the transfer of a methyl group onto N-acetylserotonin, producing melatonin (N-acetyl-5-methoxytryptamine). This Mus musculus (Mouse) protein is Acetylserotonin O-methyltransferase (Asmt).